The chain runs to 435 residues: Ribosomal protein uS12 methylthiotransferase RimO (435 aa).

Positions 3–113 (HKVGFVSLGC…VVNAVHQYLP (111 aa)) constitute an MTTase N-terminal domain. The [4Fe-4S] cluster site is built by cysteine 12, cysteine 48, cysteine 77, cysteine 144, cysteine 148, and cysteine 151. The Radical SAM core domain occupies 130-367 (LTPRHYAYLK…MQVQAEISRN (238 aa)). The TRAM domain occupies 370-435 (KNKIGSTQTV…DDYDLYASLV (66 aa)).

This sequence belongs to the methylthiotransferase family. RimO subfamily. Requires [4Fe-4S] cluster as cofactor.

The protein resides in the cytoplasm. The catalysed reaction is L-aspartate(89)-[ribosomal protein uS12]-hydrogen + (sulfur carrier)-SH + AH2 + 2 S-adenosyl-L-methionine = 3-methylsulfanyl-L-aspartate(89)-[ribosomal protein uS12]-hydrogen + (sulfur carrier)-H + 5'-deoxyadenosine + L-methionine + A + S-adenosyl-L-homocysteine + 2 H(+). In terms of biological role, catalyzes the methylthiolation of an aspartic acid residue of ribosomal protein uS12. The protein is Ribosomal protein uS12 methylthiotransferase RimO of Legionella pneumophila subsp. pneumophila (strain Philadelphia 1 / ATCC 33152 / DSM 7513).